A 450-amino-acid chain; its full sequence is Bifunctional protein GlmU (450 aa).

Residues M1 to R221 are pyrophosphorylase. Residues L6–G9, K20, Q69, G74–T75, Y96–D98, G135, E150, N165, and N219 each bind UDP-N-acetyl-alpha-D-glucosamine. D98 is a Mg(2+) binding site. Residue N219 participates in Mg(2+) binding. Residues I222–K242 are linker. The segment at G243–D450 is N-acetyltransferase. Residues R324 and K342 each coordinate UDP-N-acetyl-alpha-D-glucosamine. The active-site Proton acceptor is the H354. UDP-N-acetyl-alpha-D-glucosamine contacts are provided by Y357 and N368. Residues A371, S396, A414, and R431 each coordinate acetyl-CoA.

It in the N-terminal section; belongs to the N-acetylglucosamine-1-phosphate uridyltransferase family. This sequence in the C-terminal section; belongs to the transferase hexapeptide repeat family. As to quaternary structure, homotrimer. The cofactor is Mg(2+).

It localises to the cytoplasm. The catalysed reaction is alpha-D-glucosamine 1-phosphate + acetyl-CoA = N-acetyl-alpha-D-glucosamine 1-phosphate + CoA + H(+). It carries out the reaction N-acetyl-alpha-D-glucosamine 1-phosphate + UTP + H(+) = UDP-N-acetyl-alpha-D-glucosamine + diphosphate. It participates in nucleotide-sugar biosynthesis; UDP-N-acetyl-alpha-D-glucosamine biosynthesis; N-acetyl-alpha-D-glucosamine 1-phosphate from alpha-D-glucosamine 6-phosphate (route II): step 2/2. The protein operates within nucleotide-sugar biosynthesis; UDP-N-acetyl-alpha-D-glucosamine biosynthesis; UDP-N-acetyl-alpha-D-glucosamine from N-acetyl-alpha-D-glucosamine 1-phosphate: step 1/1. Its pathway is bacterial outer membrane biogenesis; LPS lipid A biosynthesis. Catalyzes the last two sequential reactions in the de novo biosynthetic pathway for UDP-N-acetylglucosamine (UDP-GlcNAc). The C-terminal domain catalyzes the transfer of acetyl group from acetyl coenzyme A to glucosamine-1-phosphate (GlcN-1-P) to produce N-acetylglucosamine-1-phosphate (GlcNAc-1-P), which is converted into UDP-GlcNAc by the transfer of uridine 5-monophosphate (from uridine 5-triphosphate), a reaction catalyzed by the N-terminal domain. The polypeptide is Bifunctional protein GlmU (Pseudothermotoga lettingae (strain ATCC BAA-301 / DSM 14385 / NBRC 107922 / TMO) (Thermotoga lettingae)).